Here is a 653-residue protein sequence, read N- to C-terminus: ATP-dependent rRNA helicase SPB4 (653 aa).

The Q motif signature appears at 17–45; it reads WQALTPPLSEWILDAVAAMGFTRMTPVQA. The Helicase ATP-binding domain maps to 48-257; sequence IPLFMGHKDV…RVGLRNPVKI (210 aa). 61–68 contacts ATP; it reads AVTGSGKT. Residues 205 to 208 carry the DEAD box motif; sequence DEAD. The 154-residue stretch at 291 to 444 folds into the Helicase C-terminal domain; it reads AIRQILNSID…SPPVALSDTL (154 aa). The segment at 534-653 is disordered; that stretch reads KQREKHRQES…DGESEFEGFD (120 aa). The segment covering 558 to 569 has biased composition (polar residues); the sequence is PSSSSNNDTAPW. The stretch at 571-627 forms a coiled coil; the sequence is KTLEKKSDKEKRRERKRAKKEREHWEKMTEEEKTKSRETHQMLEELRKKNRQELNAK. Basic and acidic residues-rich tracts occupy residues 572-581 and 590-626; these read TLEKKSDKEK and KERE…ELNA. The segment covering 627-636 has biased composition (polar residues); that stretch reads KSHTSSSVLS. Residues 641–653 show a composition bias toward acidic residues; it reads AELDGESEFEGFD.

It belongs to the DEAD box helicase family. DDX55/SPB4 subfamily. In terms of assembly, component of pre-60S ribosomal complexes.

The protein resides in the nucleus. Its subcellular location is the nucleolus. The catalysed reaction is ATP + H2O = ADP + phosphate + H(+). In terms of biological role, ATP-binding RNA helicase involved in the biogenesis of 60S ribosomal subunits. Binds 90S pre-ribosomal particles and dissociates from pre-60S ribosomal particles after processing of 27SB pre-rRNA. Required for the normal formation of 18S rRNA through the processing of pre-rRNAs at sites A0, A1 and A2, and the normal formation of 25S and 5.8S rRNAs through the processing of pre-rRNAs at sites C1 and C2. In Coccidioides immitis (strain RS) (Valley fever fungus), this protein is ATP-dependent rRNA helicase SPB4.